The sequence spans 349 residues: tRNA pseudouridine synthase D (349 aa).

F27 is a binding site for substrate. The active-site Nucleophile is D80. N129 is a substrate binding site. The 149-residue stretch at 155-303 (GVPNYFGAQR…VEASRRAMLL (149 aa)) folds into the TRUD domain. F329 lines the substrate pocket.

The protein belongs to the pseudouridine synthase TruD family.

It catalyses the reaction uridine(13) in tRNA = pseudouridine(13) in tRNA. Its function is as follows. Responsible for synthesis of pseudouridine from uracil-13 in transfer RNAs. This chain is tRNA pseudouridine synthase D, found in Salmonella dublin (strain CT_02021853).